We begin with the raw amino-acid sequence, 240 residues long: UDP-2,3-diacylglucosamine hydrolase (240 aa).

Mn(2+)-binding residues include Asp-8, His-10, Asp-41, Asn-79, and His-114. Residue 79–80 participates in substrate binding; it reads NR. The substrate site is built by Asp-122, Ser-160, Asn-164, Lys-167, and His-195. Mn(2+) contacts are provided by His-195 and His-197.

It belongs to the LpxH family. Mn(2+) serves as cofactor.

The protein resides in the cell inner membrane. The enzyme catalyses UDP-2-N,3-O-bis[(3R)-3-hydroxytetradecanoyl]-alpha-D-glucosamine + H2O = 2-N,3-O-bis[(3R)-3-hydroxytetradecanoyl]-alpha-D-glucosaminyl 1-phosphate + UMP + 2 H(+). The protein operates within glycolipid biosynthesis; lipid IV(A) biosynthesis; lipid IV(A) from (3R)-3-hydroxytetradecanoyl-[acyl-carrier-protein] and UDP-N-acetyl-alpha-D-glucosamine: step 4/6. Its function is as follows. Hydrolyzes the pyrophosphate bond of UDP-2,3-diacylglucosamine to yield 2,3-diacylglucosamine 1-phosphate (lipid X) and UMP by catalyzing the attack of water at the alpha-P atom. Involved in the biosynthesis of lipid A, a phosphorylated glycolipid that anchors the lipopolysaccharide to the outer membrane of the cell. The polypeptide is UDP-2,3-diacylglucosamine hydrolase (Serratia proteamaculans (strain 568)).